A 376-amino-acid chain; its full sequence is Biotin synthase (376 aa).

The Radical SAM core domain maps to 68–292 (NEVQISTLLS…IAVTRICCPS (225 aa)). [4Fe-4S] cluster-binding residues include C83, C87, and C90. Positions 129, 160, 220, and 296 each coordinate [2Fe-2S] cluster.

The protein belongs to the radical SAM superfamily. Biotin synthase family. As to quaternary structure, homodimer. Requires [4Fe-4S] cluster as cofactor. It depends on [2Fe-2S] cluster as a cofactor.

The enzyme catalyses (4R,5S)-dethiobiotin + (sulfur carrier)-SH + 2 reduced [2Fe-2S]-[ferredoxin] + 2 S-adenosyl-L-methionine = (sulfur carrier)-H + biotin + 2 5'-deoxyadenosine + 2 L-methionine + 2 oxidized [2Fe-2S]-[ferredoxin]. It participates in cofactor biosynthesis; biotin biosynthesis; biotin from 7,8-diaminononanoate: step 2/2. Catalyzes the conversion of dethiobiotin (DTB) to biotin by the insertion of a sulfur atom into dethiobiotin via a radical-based mechanism. The polypeptide is Biotin synthase (Psychrobacter cryohalolentis (strain ATCC BAA-1226 / DSM 17306 / VKM B-2378 / K5)).